Reading from the N-terminus, the 514-residue chain is Cytochrome bd-II ubiquinol oxidase subunit 1 (514 aa).

The Cytoplasmic segment spans residues 1–22; that stretch reads MWDVIDLSRWQFALTALYHFLF. Heme is bound at residue His19. Residues 23-42 form a helical membrane-spanning segment; the sequence is VPLTLGLIFLLAIMETIYVV. The Periplasmic segment spans residues 43 to 94; that stretch reads TGKTIYRDMTRFWGKLFGINFALGVATGLTMEFQFGTNWSFYSNYVGDIFGA. Residues 95-114 traverse the membrane as a helical segment; that stretch reads PLAMEALMAFFLESTFVGLF. Residues 115–129 are Cytoplasmic-facing; it reads FFGWQRLNKYQHLLV. A helical transmembrane segment spans residues 130-149; sequence TWLVAFGSNLSALWILNANG. Over 150–187 the chain is Periplasmic; it reads WMQYPTGAHFDIDTLRMEMTSFSELVFNPVSQVKFVHT. His186 is a binding site for heme. Residues 188-207 traverse the membrane as a helical segment; it reads VMAGYVTGAMFIMAISAWYL. The Cytoplasmic segment spans residues 208 to 219; the sequence is LRGRERNVALRS. Residues 220-239 traverse the membrane as a helical segment; sequence FAIGSVFGTLAIIGTLQLGD. Residues 240–392 are Periplasmic-facing; the sequence is SSAYEVAQVQ…VAPVFWSFRI (153 aa). Residue Met393 participates in heme binding. The chain crosses the membrane as a helical span at residues 393-412; it reads MVGCGSLLLLVMLIALVQTL. Residues 413–470 are Cytoplasmic-facing; the sequence is RGKIDQHRWVLKMALWSLPLPWIAIEAGWFMTEFGRQPWAIQDILPTYSAHSALTTGQ. A helical transmembrane segment spans residues 471–490; sequence LAFSLIMIVGLYTLFLIAEV. Residues 491-514 are Periplasmic-facing; it reads YLMQKYARLGPSAMQSEQPTQQQG.

Belongs to the cytochrome ubiquinol oxidase subunit 1 family. Heterodimer of subunits I and II. It depends on heme as a cofactor. In terms of processing, the N-terminus is blocked.

The protein localises to the cell inner membrane. The enzyme catalyses 2 a ubiquinol + O2 + n H(+)(in) = 2 a ubiquinone + 2 H2O + n H(+)(out). It participates in energy metabolism; oxidative phosphorylation. Its activity is regulated as follows. Inhibited by cyanide; is more sensitive to cyanide than cytochrome bd-I oxidase. Its function is as follows. A terminal oxidase that catalyzes quinol-dependent, Na(+)-independent oxygen uptake. Prefers menadiol over other quinols although ubiquinol was not tested. Generates a proton motive force using protons and electrons from opposite sides of the membrane to generate H(2)O, transferring 1 proton/electron. The polypeptide is Cytochrome bd-II ubiquinol oxidase subunit 1 (appC) (Escherichia coli (strain K12)).